A 253-amino-acid chain; its full sequence is ABC transporter D-alanine-binding periplasmic protein (253 aa).

The first 22 residues, 1-22 (MLSKKFGLSMIVLGIMSSSAFA), serve as a signal peptide directing secretion. D-alanine contacts are provided by glycine 95, serine 97, arginine 102, alanine 147, and glutamate 191.

Belongs to the bacterial solute-binding protein 3 family. In terms of assembly, monomer.

Its subcellular location is the periplasm. In terms of biological role, part of the ABC transporter complex dalSTUV, that imports D-alanine into the cytoplasm. Helps protect the organism from oxidative killing by host neutrophils through sequestration of D-alanine, a substrate that is converted to hydrogen peroxide by the host enzyme DAO (D-amino acid oxidase). DalS shuttles D-alanine from the periplasm to the DalTUV complex situated in the inner membrane and through hydrolysis of ATP, D-alanine is transported across the membrane into the cytoplasm. Not required for the metabolism of D-alanine found in the stem peptide of peptidoglycan. The protein is ABC transporter D-alanine-binding periplasmic protein of Salmonella typhimurium (strain LT2 / SGSC1412 / ATCC 700720).